The following is a 1085-amino-acid chain: Phosphorylase b kinase regulatory subunit beta (1085 aa).

Phosphoserine occurs at positions 10, 19, and 693. Calmodulin-binding stretches follow at residues 760 to 787 and 912 to 943; these read RVYR…VVDS and SGRC…ILER. A lipid anchor (S-farnesyl cysteine) is attached at Cys-1082.

It belongs to the phosphorylase b kinase regulatory chain family. In terms of assembly, hexadecamer of 4 heterotetramers, each composed of alpha, beta, gamma, and delta subunits. Alpha (PHKA1 or PHKA2) and beta (PHKB) are regulatory subunits, gamma (PHKG1 or PHKG2) is the catalytic subunit, and delta is calmodulin. Post-translationally, although the final Cys may be farnesylated, the terminal tripeptide is probably not removed, and the C-terminus is not methylated.

The protein localises to the cell membrane. It functions in the pathway glycan biosynthesis; glycogen metabolism. By phosphorylation of various serine residues. In terms of biological role, phosphorylase b kinase catalyzes the phosphorylation of serine in certain substrates, including troponin I. The beta chain acts as a regulatory unit and modulates the activity of the holoenzyme in response to phosphorylation. The polypeptide is Phosphorylase b kinase regulatory subunit beta (Phkb) (Mus musculus (Mouse)).